A 47-amino-acid polypeptide reads, in one-letter code: IgA-inducing protein (47 aa).

Positions 1–24 (MKKRSVSGCNITILAVVFSHLSAG) are cleaved as a signal peptide.

In terms of tissue distribution, expressed in Peyer patches, spleen, thymus, liver and mesenteric lymph node. Expressed at high levels by dendritic cells, and at lower levels by T-cells, monocytes and B-cells.

The protein localises to the secreted. Functionally, enhances IgA secretion from B-cells stimulated via CD40. The polypeptide is IgA-inducing protein (IGIP) (Bos taurus (Bovine)).